A 388-amino-acid polypeptide reads, in one-letter code: MPALTQHSTSITLFRISAAMFLNYLTIGIPLVMLPLYVQQQLHLSDLLIGIAVGSQFIATLLTRGAAGRKADTSGGRRTVITGQFYCAASGLLMLVSLIAHPVPLLAWAILIVGRVLLGIGESFILTGNLTWGMWLAGSTHAGQVISWNGMATYGALAIGAPLGLSLYARAGLALPALLVVLLPIIASGVIYGIPGNIPTARPRVPVLRVVGLVWRPGTGLVLQGIGFATLSAFTALWFNERHWDNTGFAMTLFGIAFIAVRFFCAKFPDRYGGATVATFSLLVEGTGLAVMWAAPSAGAALIGAAITGCGCSLMFPSLGVEVVRRVPPEIRGTALGVWSAFQDLAYGFTGPIAGLLTPFIGYQQVFLLAAACALLGAAVVHLLLRQH.

11 helical membrane-spanning segments follow: residues 18–38, 42–62, 89–111, 116–136, 145–165, 171–191, 219–239, 248–268, 287–307, 341–361, and 365–385; these read AAMFLNYLTIGIPLVMLPLYV, LHLSDLLIGIAVGSQFIATLL, ASGLLMLVSLIAHPVPLLAWAIL, VLLGIGESFILTGNLTWGMWL, VISWNGMATYGALAIGAPLGL, AGLALPALLVVLLPIIASGVI, TGLVLQGIGFATLSAFTALWF, GFAMTLFGIAFIAVRFFCAKF, TGLAVMWAAPSAGAALIGAAI, AFQDLAYGFTGPIAGLLTPFI, and QVFLLAAACALLGAAVVHLLL.

This sequence belongs to the major facilitator superfamily. YfcJ family.

It is found in the cell inner membrane. This is an uncharacterized protein from Salmonella typhimurium (strain LT2 / SGSC1412 / ATCC 700720).